The following is a 529-amino-acid chain: Glucocorticoid modulatory element-binding protein 2 (529 aa).

The SAND domain maps to 80–162; the sequence is EEGENLEAEI…RKIMDSGELD (83 aa). Cys-109 contacts Zn(2+). The DNA site is built by Lys-135, Lys-139, Lys-142, and Arg-153. Residue Lys-154 forms a Glycyl lysine isopeptide (Lys-Gly) (interchain with G-Cter in SUMO1); alternate linkage. Lys-154 participates in a covalent cross-link: Glycyl lysine isopeptide (Lys-Gly) (interchain with G-Cter in SUMO2); alternate. Positions 166, 170, and 174 each coordinate Zn(2+). Residues 244-347 adopt a coiled-coil conformation; the sequence is LLDEVIQEFQ…HLSNVLMTLT (104 aa). At Ser-372 the chain carries Phosphoserine.

Homodimer, and heterodimer of GMEB1 and GMEB2. Interacts with the glucocorticoid receptor (NR3C1). May interact with CREB-binding protein (CBP).

Its subcellular location is the nucleus. It localises to the cytoplasm. Trans-acting factor that binds to glucocorticoid modulatory elements (GME) present in the TAT (tyrosine aminotransferase) promoter and increases sensitivity to low concentrations of glucocorticoids. Also binds to the transferrin receptor promoter. The chain is Glucocorticoid modulatory element-binding protein 2 (Gmeb2) from Rattus norvegicus (Rat).